Consider the following 436-residue polypeptide: GTPase Der (436 aa).

2 EngA-type G domains span residues 4–167 and 175–351; these read PTIA…PNEE and IKFS…QSQN. Residues 10-17, 57-61, 119-122, 181-188, 229-233, and 294-297 each bind GTP; these read GRPNVGKS, DTGGI, NKVD, DTAGM, and NKWD. Positions 352–436 constitute a KH-like domain; the sequence is TRIPSAVLND…PIHLIARKRK (85 aa).

Belongs to the TRAFAC class TrmE-Era-EngA-EngB-Septin-like GTPase superfamily. EngA (Der) GTPase family. Associates with the 50S ribosomal subunit.

GTPase that plays an essential role in the late steps of ribosome biogenesis. The polypeptide is GTPase Der (Streptococcus sanguinis (strain SK36)).